The sequence spans 434 residues: UDP-N-acetylmuramate--L-alanine ligase (434 aa).

108–114 contacts ATP; it reads GSHGKTT.

This sequence belongs to the MurCDEF family.

Its subcellular location is the cytoplasm. The catalysed reaction is UDP-N-acetyl-alpha-D-muramate + L-alanine + ATP = UDP-N-acetyl-alpha-D-muramoyl-L-alanine + ADP + phosphate + H(+). It functions in the pathway cell wall biogenesis; peptidoglycan biosynthesis. Its function is as follows. Cell wall formation. In Geobacillus thermodenitrificans (strain NG80-2), this protein is UDP-N-acetylmuramate--L-alanine ligase.